A 256-amino-acid chain; its full sequence is Chlorophyll a-b binding protein CP24 10B, chloroplastic (256 aa).

A chloroplast-targeting transit peptide spans 1–45 (MTTTSATAVLNGLSSSFLTGGKKTQALLGAHVTARVTTPKRFVVA). 2 consecutive transmembrane segments (helical) span residues 106–126 (WAMA…IPWF) and 134–154 (AIAP…MGWV).

It belongs to the ELIP/psbS family.

It localises to the plastid. It is found in the chloroplast thylakoid membrane. This chain is Chlorophyll a-b binding protein CP24 10B, chloroplastic (CAP10B), found in Solanum lycopersicum (Tomato).